A 237-amino-acid polypeptide reads, in one-letter code: MPAVYKRILLKLSGEALMGDAQYGIDRTVVERIVVEIAGVLQLGVEVAIVVGGGNIFRGMKSAGDGMDRVTADYMGMLATTMNALALHDAMRRNGVVSRVQSALRIDQVVEPYIRGKALRYLNERKVVIFAAGTGNPFFTTDTAAALRGMEMNANIVLKATKVDGIYTSDPFENKDAQRFRNLTFDEAINKNLQVMDATALTLCRDQKLPINVFSIFKTGALKRVIMGEDEGTLVII.

11-14 (KLSG) lines the ATP pocket. A UMP-binding site is contributed by Gly-53. 2 residues coordinate ATP: Gly-54 and Arg-58. Residues Asp-73 and 134-141 (TGNPFFTT) contribute to the UMP site. Positions 161, 167, and 170 each coordinate ATP.

The protein belongs to the UMP kinase family. As to quaternary structure, homohexamer.

It localises to the cytoplasm. The enzyme catalyses UMP + ATP = UDP + ADP. The protein operates within pyrimidine metabolism; CTP biosynthesis via de novo pathway; UDP from UMP (UMPK route): step 1/1. Its activity is regulated as follows. Inhibited by UTP. Functionally, catalyzes the reversible phosphorylation of UMP to UDP. This is Uridylate kinase from Nitrosomonas eutropha (strain DSM 101675 / C91 / Nm57).